The chain runs to 1677 residues: MKLQIYNPNGEEFQYDFKSDIPFSFHIKNLYENLVVHNNGLKKILQSFPYCEANRSYDEIYSHYSLQEATSGNWMSNSTDSTFIKGSPDNTLFFKLKPLTHYLTPIEKLIGTTTSSSSSSSSPSSSSSSSSSSSSSSPSSPSLIGLILSLQTHLALLMYENIYGNKNNSKDTNNSGTINNNNNNNNNSGGSNIKLSSTPSSSFLTFPTSTSNLLLSSDVIKKILNIVFLAPSPQSLQLLVFLVSNSPSNDDLLSQISNTHSNSQLHGFSIGGGGGGSGNNSSITSIGGGDSKKIENKDNSGSAVVGSQSNSPQSSSFVKSQQIQQQQQYQKPNNSSPPPTTTTTTTTTTTTSGSQVKLSVGGNSGSFNNTTESSPSLFTLVDTAIKSVSTEHSSNFYLHILNNPAYNEVIETHFEMVCLILSLINNMYRLSPNPINYFNRLHNDSILKYIMEFAKKNQKIYQNTQYIVLRNYLMKELHMQRLHPINVDKVLSHQILLSDLWGSALSSYPFGGINSEHWLLLGFRSSNPMEDFKNTGVLALRNLSYFSKQHLQPFQSLLLTQTKREKDDNDNNNNKVIDKPIITNKFNIETLDDDNDNNNNQELNNNNNNNNNNNYNIKTKPRSNSRSYPLATVAISLTYTLSNIFRIGRINDSPIDSSIWDIAFSGSNWFDEIFVTTFNLFESLWHSEAHSYSDFPQVISHTREIIEKVCSKSPINLQDFKDKLTTLLEKKDEISSLDVNTVETLARYHQLQPSHINKRHIHKFFGERVNVDKLPNSNNPTDNIITTNTNTTTTTTTSTNNDCESTILQDHIESDKNNDDNNNNNEIIDDCESNSSFLVSSNTKEFSGKNLIKFFGEKTDQKEQYSTQPSNVKSYKLKNFFGDQPVVINKNGGGGGGGGGGGVDNELNQGGETVNKNKNDLIDDSDDENDNDEVNNNNNSNRINQDINHKLYGNSPISERNHRLHVFFGEWFDTEQVEYNEKIRSSSSTPDTSSPPLNSQPESARLHKLNKFFGERVNIPISKPKVIGEGGGGGIFPIDDIDVTDGSTNNHHIGGGGGGGSSDNLLSRSPEETRSDFKAQKVLGERLDIKKEKESINFASQPSNVREYKLHKLFGEMVPAHKQKSPKLQGGSGPWKKGNVSKSDSQAVVAPLNTIKFNNGNTNMNPLLQSCPTPINSPTSLSSDHLLDDVLDLNQTNNNIDNENDDINEAIIPPSLSPTLLGVNNHGEEEEEEEEEEEGYNHTQDNHAQDNHAQDNLLLLDDDDDTKSEPIPSTNTLLDSDIIPNNTTTTTTTTTTTTTTTTNTTGQKRISILSTDTNRPGSSNYGESSLSNGSRFDGIPESTTHNANGDDDHQINLHSSSPQPLPKFVNTDDEDNNNNNNNKKQDDDEDDEDDDDKEEIRKKRENKTNHRLHVFFGERFDVENIHFFTRVSSSPGSYDAHLNNPHLSVSPQPETVRSYKLKKFFGKNPEDNVTLSSSYDSSTSPLLSQLNHHHHHNHHQSASNLINNINNNNNNNNNNNSNNNSNNQNNLNSSNNSNNSSISNNSGKNNTNNNNNNNTNNNNDNSPSTSPSSSFKKHQYQYVSAEDPEGDVSKTNEIRKLRRDFKTQRILGERLNIKKESTVVAFQDQPSTIKVDKLISLFGEKVGFSLKRKESQRDLQHQASSSNLKFSLASSSK.

Disordered stretches follow at residues 112–139 (TTTSSSSSSSSPSSSSSSSSSSSSSSPS), 168–194 (NSKDTNNSGTINNNNNNNNNSGGSNIK), 264–372 (QLHG…NTTE), 592–625 (DDDNDNNNNQELNNNNNNNNNNNYNIKTKPRSNS), 775–801 (PNSNNPTDNIITTNTNTTTTTTTSTNN), 888–947 (INKN…NQDI), 982–1002 (KIRSSSSTPDTSSPPLNSQPE), 1047–1075 (STNNHHIGGGGGGGSSDNLLSRSPEETRS), 1122–1141 (KQKSPKLQGGSGPWKKGNVS), 1197–1248 (NNNI…DNHA), 1261–1404 (DDDD…RKKR), 1434–1454 (SPGSYDAHLNNPHLSVSPQPE), 1467–1593 (KNPE…GDVS), and 1654–1677 (ESQRDLQHQASSSNLKFSLASSSK). Low complexity-rich tracts occupy residues 115 to 139 (SSSSSSSSPSSSSSSSSSSSSSSPS) and 172 to 194 (TNNSGTINNNNNNNNNSGGSNIK). A compositionally biased stretch (gly residues) spans 269–278 (SIGGGGGGSG). Low complexity-rich tracts occupy residues 307 to 334 (SQSNSPQSSSFVKSQQIQQQQQYQKPNN), 341 to 352 (TTTTTTTTTTTS), and 597 to 616 (NNNNQELNNNNNNNNNNNYN). The ELMO domain maps to 492–710 (SHQILLSDLW…HTREIIEKVC (219 aa)). The segment covering 891-903 (NGGGGGGGGGGGV) has biased composition (gly residues). The span at 922-933 (IDDSDDENDNDE) shows a compositional bias: acidic residues. Composition is skewed to low complexity over residues 934–946 (VNNNNNSNRINQD) and 985–996 (SSSSTPDTSSPP). Positions 1186–1212 (LLDDVLDLNQTNNNIDNENDDINEAII) form a coiled coil. Over residues 1228–1238 (EEEEEEEEEEE) the composition is skewed to acidic residues. Over residues 1285 to 1305 (NNTTTTTTTTTTTTTTTTNTT) the composition is skewed to low complexity. Positions 1306–1334 (GQKRISILSTDTNRPGSSNYGESSLSNGS) are enriched in polar residues. Acidic residues predominate over residues 1387–1397 (DDEDDEDDDDK). The span at 1445 to 1454 (PHLSVSPQPE) shows a compositional bias: polar residues. Low complexity-rich tracts occupy residues 1475–1488 (LSSSYDSSTSPLLS), 1503–1574 (SNLI…PSSS), and 1663–1677 (ASSSNLKFSLASSSK).

The protein is ELMO domain-containing protein E (elmoE) of Dictyostelium discoideum (Social amoeba).